A 398-amino-acid polypeptide reads, in one-letter code: Candidapepsin-2 (398 aa).

The first 18 residues, 1-18, serve as a signal peptide directing secretion; that stretch reads MFLKNIFIGLAIALLVDA. A propeptide spans 19-56 (activation peptide); it reads TPTTTKRSAGFVALDFSVVKTPKAFPVTNGQEGKTSKR. A Peptidase A1 domain is found at 70–384; the sequence is YAADITVGSN…DLDNNEISLA (315 aa). Asp-88 is an active-site residue. Pepstatin A is bound at residue 88-90; it reads DTG. A disulfide bond links Cys-103 and Cys-115. Pepstatin A is bound by residues 141-142 and 274-278; these read GD and DSGTT. Asp-274 is a catalytic residue. The cysteines at positions 312 and 350 are disulfide-linked. N-linked (GlcNAc...) asparagine glycosylation is found at Asn-313 and Asn-321.

Belongs to the peptidase A1 family. In terms of assembly, monomer. Post-translationally, O-glycosylated.

It localises to the secreted. It catalyses the reaction Preferential cleavage at the carboxyl of hydrophobic amino acids, but fails to cleave 15-Leu-|-Tyr-16, 16-Tyr-|-Leu-17 and 24-Phe-|-Phe-25 of insulin B chain. Activates trypsinogen, and degrades keratin.. The sequence is that of Candidapepsin-2 (SAP2) from Candida albicans (strain WO-1) (Yeast).